The sequence spans 352 residues: Small ribosomal subunit biogenesis GTPase RsgA (352 aa).

Residues 1-15 (MTKRKLTQNQKRRIH) show a composition bias toward basic residues. Positions 1 to 26 (MTKRKLTQNQKRRIHSNNVKALDRHH) are disordered. The CP-type G domain occupies 106–274 (ENEIARPDYY…LIDSPGIREF (169 aa)). GTP contacts are provided by residues 162-165 (NKVD) and 216-224 (GQSGVGKSS). Zn(2+) contacts are provided by C298, C303, H305, and C311.

Belongs to the TRAFAC class YlqF/YawG GTPase family. RsgA subfamily. Monomer. Associates with 30S ribosomal subunit, binds 16S rRNA. Zn(2+) serves as cofactor.

The protein localises to the cytoplasm. One of several proteins that assist in the late maturation steps of the functional core of the 30S ribosomal subunit. Helps release RbfA from mature subunits. May play a role in the assembly of ribosomal proteins into the subunit. Circularly permuted GTPase that catalyzes slow GTP hydrolysis, GTPase activity is stimulated by the 30S ribosomal subunit. The sequence is that of Small ribosomal subunit biogenesis GTPase RsgA from Mannheimia succiniciproducens (strain KCTC 0769BP / MBEL55E).